We begin with the raw amino-acid sequence, 347 residues long: Selenide, water dikinase (347 aa).

The active site involves cysteine 17. Residues lysine 20 and 48–50 contribute to the ATP site; that span reads TRD. A Mg(2+)-binding site is contributed by aspartate 51. ATP contacts are provided by residues aspartate 68, aspartate 91, and 139–141; that span reads GHS. A Mg(2+)-binding site is contributed by aspartate 91. Mg(2+) is bound at residue aspartate 227.

This sequence belongs to the selenophosphate synthase 1 family. Class I subfamily. In terms of assembly, homodimer. The cofactor is Mg(2+).

The catalysed reaction is hydrogenselenide + ATP + H2O = selenophosphate + AMP + phosphate + 2 H(+). Synthesizes selenophosphate from selenide and ATP. The polypeptide is Selenide, water dikinase (Escherichia coli O139:H28 (strain E24377A / ETEC)).